A 310-amino-acid polypeptide reads, in one-letter code: tRNA dimethylallyltransferase (310 aa).

Position 14–21 (14–21 (GPTASGKT)) interacts with ATP. Residue 16–21 (TASGKT) participates in substrate binding. 3 interaction with substrate tRNA regions span residues 39 to 42 (DSAL), 163 to 167 (QRLSR), and 244 to 249 (RCVGYR).

This sequence belongs to the IPP transferase family. Monomer. Mg(2+) is required as a cofactor.

It carries out the reaction adenosine(37) in tRNA + dimethylallyl diphosphate = N(6)-dimethylallyladenosine(37) in tRNA + diphosphate. In terms of biological role, catalyzes the transfer of a dimethylallyl group onto the adenine at position 37 in tRNAs that read codons beginning with uridine, leading to the formation of N6-(dimethylallyl)adenosine (i(6)A). The protein is tRNA dimethylallyltransferase of Aeromonas salmonicida (strain A449).